A 268-amino-acid polypeptide reads, in one-letter code: Glutamate 5-kinase (268 aa).

An ATP-binding site is contributed by K15. 3 residues coordinate substrate: S55, D142, and N158. 178-179 (SD) serves as a coordination point for ATP.

It belongs to the glutamate 5-kinase family.

It is found in the cytoplasm. The catalysed reaction is L-glutamate + ATP = L-glutamyl 5-phosphate + ADP. It functions in the pathway amino-acid biosynthesis; L-proline biosynthesis; L-glutamate 5-semialdehyde from L-glutamate: step 1/2. Catalyzes the transfer of a phosphate group to glutamate to form L-glutamate 5-phosphate. The polypeptide is Glutamate 5-kinase (Oenococcus oeni (strain ATCC BAA-331 / PSU-1)).